The primary structure comprises 357 residues: Intracellular hyaluronan-binding protein 4 (357 aa).

Disordered regions lie at residues 56 to 116 (VVAR…HKTA), 150 to 186 (ERPR…KREF), and 313 to 357 (PGCG…PALT). Residues 96-115 (PKQEECGGKDNSRAEKEHKT) show a composition bias toward basic and acidic residues. Positions 155 to 171 (CGRGRGGMQGRGRGGGI) are enriched in gly residues. Positions 176-186 (DGFDQRGKREF) are enriched in basic and acidic residues. Residues 348 to 357 (DDPEDFPALT) show a composition bias toward acidic residues.

The protein belongs to the SERBP1-HABP4 family. Associates with ribosomes; promoting ribosome stabilization. Interacts with EEF2/eEF2; promoting ribosome stabilization.

The protein resides in the nucleus. It is found in the cytoplasm. Its subcellular location is the stress granule. It localises to the sarcoplasm. The protein localises to the nuclear body. The protein resides in the nucleolus. It is found in the nucleus speckle. Its subcellular location is the cajal body. It localises to the gem. Ribosome-binding protein that promotes ribosome hibernation, a process during which ribosomes are stabilized in an inactive state and preserved from proteasomal degradation. Acts via its association with EEF2/eEF2 factor at the A-site of the ribosome, promoting ribosome stabilization in an inactive state compatible with storage. Plays a key role in ribosome hibernation in the mature egg by promoting ribosome stabilization. Ribosomes, which are produced in large quantities during oogenesis, are stored and translationally repressed in the egg and early embryo. The chain is Intracellular hyaluronan-binding protein 4 from Gallus gallus (Chicken).